The following is a 299-amino-acid chain: Heat stress transcription factor B-2a (299 aa).

Residues 21 to 115 (PTPFLTKTFN…LLREIQRRKI (95 aa)) mediate DNA binding. The segment at 119-157 (HQTVVAPSSEQRNQTMVVSPSNSGEDNNNNQVMSSSPSS) is disordered. The tract at residues 166–211 (TGNGGLSVELLEENEKLRSQNIQLNRELTQMKSICDNIYSLMSNYV) is hydrophobic repeat HR-A/B. Residues 261-264 (KRTR) carry the Nuclear localization signal motif.

The protein belongs to the HSF family. Class B subfamily. As to quaternary structure, homotrimer. Post-translationally, exhibits temperature-dependent phosphorylation.

It localises to the nucleus. Transcriptional regulator that specifically binds DNA sequence 5'-AGAAnnTTCT-3' known as heat shock promoter elements (HSE). This chain is Heat stress transcription factor B-2a (HSFB2A), found in Arabidopsis thaliana (Mouse-ear cress).